A 396-amino-acid chain; its full sequence is Elongation factor Tu 2 (396 aa).

The tr-type G domain occupies 10–206 (KPHVNVGTIG…ALDSYIPLPE (197 aa)). Positions 19-26 (GHVDHGKT) are G1. A GTP-binding site is contributed by 19–26 (GHVDHGKT). Residue Thr26 participates in Mg(2+) binding. The tract at residues 60–64 (GITIN) is G2. A G3 region spans residues 81-84 (DCPG). GTP is bound by residues 81–85 (DCPGH) and 136–139 (NKCD). The segment at 136-139 (NKCD) is G4. A G5 region spans residues 174–176 (SAK).

It belongs to the TRAFAC class translation factor GTPase superfamily. Classic translation factor GTPase family. EF-Tu/EF-1A subfamily. Monomer.

The protein localises to the cytoplasm. It catalyses the reaction GTP + H2O = GDP + phosphate + H(+). GTP hydrolase that promotes the GTP-dependent binding of aminoacyl-tRNA to the A-site of ribosomes during protein biosynthesis. The polypeptide is Elongation factor Tu 2 (Albidiferax ferrireducens (strain ATCC BAA-621 / DSM 15236 / T118) (Rhodoferax ferrireducens)).